The following is a 137-amino-acid chain: Large ribosomal subunit protein uL16 (137 aa).

A compositionally biased stretch (basic residues) spans 1-13 (MLQPSRRKYRKEQ). The disordered stretch occupies residues 1-22 (MLQPSRRKYRKEQKGRNTGLAT).

It belongs to the universal ribosomal protein uL16 family. In terms of assembly, part of the 50S ribosomal subunit.

In terms of biological role, binds 23S rRNA and is also seen to make contacts with the A and possibly P site tRNAs. The chain is Large ribosomal subunit protein uL16 from Azoarcus sp. (strain BH72).